The primary structure comprises 424 residues: L-glutamine:2-deoxy-scyllo-inosose aminotransferase (424 aa).

K202 carries the N6-(pyridoxal phosphate)lysine modification.

Belongs to the DegT/DnrJ/EryC1 family. L-glutamine:2-deoxy-scyllo-inosose/scyllo-inosose aminotransferase subfamily. Pyridoxal 5'-phosphate serves as cofactor.

It catalyses the reaction 2-deoxy-L-scyllo-inosose + L-glutamine = 2-deoxy-scyllo-inosamine + 2-oxoglutaramate. The catalysed reaction is 3-amino-2,3-dideoxy-scyllo-inosose + L-glutamine = 2-deoxystreptamine + 2-oxoglutaramate. Its pathway is metabolic intermediate biosynthesis; 2-deoxystreptamine biosynthesis; 2-deoxystreptamine from D-glucose 6-phosphate: step 2/4. It functions in the pathway antibiotic biosynthesis; lividomycin biosynthesis. Catalyzes the PLP-dependent transamination of 2-deoxy-scyllo-inosose (2-DOI) to form 2-deoxy-scyllo-inosamine (2-DOIA) using L-glutamine as the amino donor. Also catalyzes the transamination of 3-amino-2,3-dideoxy-scyllo-inosose (keto-2-DOIA) into 2-deoxystreptamine (2-DOS). This chain is L-glutamine:2-deoxy-scyllo-inosose aminotransferase (livS), found in Streptomyces lividus.